The following is a 1339-amino-acid chain: Receptor tyrosine-protein kinase erbB-3 (1339 aa).

The N-terminal stretch at methionine 1–glycine 19 is a signal peptide. The Extracellular portion of the chain corresponds to serine 20–histidine 641. Asparagine 126 is a glycosylation site (N-linked (GlcNAc...) asparagine). Disulfide bonds link cysteine 186–cysteine 194, cysteine 190–cysteine 202, cysteine 210–cysteine 218, cysteine 214–cysteine 226, cysteine 227–cysteine 235, cysteine 231–cysteine 243, cysteine 246–cysteine 255, cysteine 259–cysteine 286, cysteine 290–cysteine 301, cysteine 305–cysteine 320, and cysteine 323–cysteine 327. Asparagine 250 carries N-linked (GlcNAc...) asparagine glycosylation. N-linked (GlcNAc...) asparagine glycans are attached at residues asparagine 353, asparagine 408, asparagine 414, asparagine 437, and asparagine 469. 10 cysteine pairs are disulfide-bonded: cysteine 500/cysteine 509, cysteine 504/cysteine 517, cysteine 520/cysteine 529, cysteine 533/cysteine 549, cysteine 552/cysteine 565, cysteine 556/cysteine 573, cysteine 576/cysteine 585, cysteine 589/cysteine 610, cysteine 613/cysteine 621, and cysteine 617/cysteine 629. N-linked (GlcNAc...) asparagine glycosylation occurs at asparagine 522. The N-linked (GlcNAc...) asparagine glycan is linked to asparagine 566. A glycan (N-linked (GlcNAc...) asparagine) is linked at asparagine 616. Residues leucine 642–leucine 662 traverse the membrane as a helical segment. At tyrosine 663–isoleucine 1339 the chain is on the cytoplasmic side. Position 684 is a phosphoserine (serine 684). A Protein kinase domain is found at leucine 707–threonine 964. Residues leucine 713 to valine 721, lysine 740, glutamine 786 to leucine 788, and aspartate 832 to asparagine 837 each bind ATP. The active-site Proton acceptor is the aspartate 832. Serine 980 bears the Phosphoserine mark. 3 disordered regions span residues leucine 1028–methionine 1052, arginine 1077–tyrosine 1156, and serine 1181–glycine 1212. A compositionally biased stretch (acidic residues) spans threonine 1185–glutamate 1195.

It belongs to the protein kinase superfamily. Tyr protein kinase family. EGF receptor subfamily. In terms of assembly, monomer and homodimer. Heterodimer with each of the other ERBB receptors (Potential). Interacts with CSPG5, PA2G4, GRB7 and MUC1. Interacts with MYOC. Found in a ternary complex with NRG1 and ITGAV:ITGB3 or ITGA6:ITGB4. Autophosphorylated. Ligand-binding increases phosphorylation on tyrosine residues and promotes its association with the p85 subunit of phosphatidylinositol 3-kinase. As to expression, in the muscle, expression localizes to the synaptic sites of muscle fibers.

It localises to the membrane. The enzyme catalyses L-tyrosyl-[protein] + ATP = O-phospho-L-tyrosyl-[protein] + ADP + H(+). Its function is as follows. Tyrosine-protein kinase that plays an essential role as cell surface receptor for neuregulins. Binds to neuregulin-1 (NRG1) and is activated by it; ligand-binding increases phosphorylation on tyrosine residues and promotes its association with the p85 subunit of phosphatidylinositol 3-kinase. May also be activated by CSPG5. Involved in the regulation of myeloid cell differentiation. In Mus musculus (Mouse), this protein is Receptor tyrosine-protein kinase erbB-3 (Erbb3).